Reading from the N-terminus, the 402-residue chain is uncharacterized protein (402 aa).

It to M.genitalium MG148.

This is an uncharacterized protein from Caldicellulosiruptor sp. (strain Rt8B.4).